The primary structure comprises 357 residues: Phosphoribosylformylglycinamidine cyclo-ligase (357 aa).

It belongs to the AIR synthase family.

The protein resides in the cytoplasm. It catalyses the reaction 2-formamido-N(1)-(5-O-phospho-beta-D-ribosyl)acetamidine + ATP = 5-amino-1-(5-phospho-beta-D-ribosyl)imidazole + ADP + phosphate + H(+). The protein operates within purine metabolism; IMP biosynthesis via de novo pathway; 5-amino-1-(5-phospho-D-ribosyl)imidazole from N(2)-formyl-N(1)-(5-phospho-D-ribosyl)glycinamide: step 2/2. The sequence is that of Phosphoribosylformylglycinamidine cyclo-ligase from Rhizobium etli (strain CIAT 652).